Here is a 397-residue protein sequence, read N- to C-terminus: Acetate kinase (397 aa).

A Mg(2+)-binding site is contributed by Asn-8. Lys-15 contacts ATP. Arg-89 is a binding site for substrate. Asp-146 acts as the Proton donor/acceptor in catalysis. Residues 206 to 210, 283 to 285, and 331 to 335 contribute to the ATP site; these read HVGNG, DMR, and GMGEN. Glu-383 lines the Mg(2+) pocket.

This sequence belongs to the acetokinase family. Homodimer. Mg(2+) is required as a cofactor. Mn(2+) serves as cofactor.

Its subcellular location is the cytoplasm. It catalyses the reaction acetate + ATP = acetyl phosphate + ADP. It functions in the pathway metabolic intermediate biosynthesis; acetyl-CoA biosynthesis; acetyl-CoA from acetate: step 1/2. Its function is as follows. Catalyzes the formation of acetyl phosphate from acetate and ATP. Can also catalyze the reverse reaction. This chain is Acetate kinase, found in Streptococcus agalactiae serotype Ia (strain ATCC 27591 / A909 / CDC SS700).